We begin with the raw amino-acid sequence, 54 residues long: Rubredoxin (54 aa).

Position 1 is an N-formylmethionine (methionine 1). The Rubredoxin-like domain occupies 1–54 (MKKYTCTVCGYIYNPEDGDPDNGVNPGTDFKDIPDDWVCPLCGVGKDQFEEVEE). Residues cysteine 6, cysteine 9, cysteine 39, and cysteine 42 each contribute to the Fe cation site.

The protein belongs to the rubredoxin family. The cofactor is Fe(3+).

Functionally, rubredoxin is a small nonheme, iron protein lacking acid-labile sulfide. Its single Fe, chelated to 4 Cys, functions as an electron acceptor and may also stabilize the conformation of the molecule. The polypeptide is Rubredoxin (Clostridium pasteurianum).